The following is a 493-amino-acid chain: 11S globulin seed storage protein G3 (493 aa).

Positions 1 to 20 are cleaved as a signal peptide; that stretch reads MASKATLLLAFTLLFATCIA. 2 disulfides stabilise this stretch: Cys-32/Cys-65 and Cys-103/Cys-312. Positions 37–248 constitute a Cupin type-1 1 domain; the sequence is IEALEPIEVI…SFNVDQETAQ (212 aa). Disordered regions lie at residues 190-229 and 269-305; these read PQAQAQSQQQQQRQPRQQSPQRQRQRQRQGQGQNAGNIFN and IVRPPQDRRSPRQQQEQATSPRQQQEQQQGRRGGWSN. Low complexity-rich tracts occupy residues 191 to 221 and 280 to 298; these read QAQAQSQQQQQRQPRQQSPQRQRQRQRQGQG and RQQQEQATSPRQQQEQQQG. In terms of domain architecture, Cupin type-1 2 spans 318–467; the sequence is VNIDNPSQAD…RYQLSREEAQ (150 aa).

Belongs to the 11S seed storage protein (globulins) family. Hexamer; each subunit is composed of an acidic and a basic chain derived from a single precursor and linked by a disulfide bond.

Its function is as follows. This is a seed storage protein. This chain is 11S globulin seed storage protein G3 (HAG3), found in Helianthus annuus (Common sunflower).